Consider the following 395-residue polypeptide: MSRHFFTSESVSEGHPDKIADQISDAVLDAIIAKDKHARVACETMVKTGVAIISGEVSTNAWVDLEKLTRNVISDIGYTSSDVGFDGATCGIMNLIGQQSPEIAQGVDRSNPEEQGAGDQGLMFGYATNETPTLMPAPLYYSHRLVERQAEARKSGVLPWLRPDAKSQVTFIYEDNKPVAIDTVVLSTQHNPDIKQEDLVSAVMENIINHVLPAELLTEDTKYHINPTGRFVIGGPVGDCGLTGRKIIVDTYGGMARHGGGAFSGKDPSKVDRSAAYAGRYVAKNIVAAGLADRCEIQISYAIGVAEPTSISIDTFGTGSISEERLVEIVREHFDLRPYGITKMLDLLHPMYQQTAAYGHFGREPFEMTVGDDTFTAFSWEKTDKADDLRKAAGL.

Histidine 15 is an ATP binding site. Residue aspartate 17 participates in Mg(2+) binding. Glutamate 43 contacts K(+). L-methionine-binding residues include glutamate 56 and glutamine 99. The segment at 99–109 is flexible loop; sequence QSPEIAQGVDR. ATP is bound by residues 164–166, 230–231, aspartate 239, 245–246, alanine 262, and lysine 266; these read DAK, RF, and RK. Aspartate 239 contributes to the L-methionine binding site. Residue lysine 270 participates in L-methionine binding.

Belongs to the AdoMet synthase family. As to quaternary structure, homotetramer; dimer of dimers. Mg(2+) is required as a cofactor. It depends on K(+) as a cofactor.

It localises to the cytoplasm. The enzyme catalyses L-methionine + ATP + H2O = S-adenosyl-L-methionine + phosphate + diphosphate. Its pathway is amino-acid biosynthesis; S-adenosyl-L-methionine biosynthesis; S-adenosyl-L-methionine from L-methionine: step 1/1. Catalyzes the formation of S-adenosylmethionine (AdoMet) from methionine and ATP. The overall synthetic reaction is composed of two sequential steps, AdoMet formation and the subsequent tripolyphosphate hydrolysis which occurs prior to release of AdoMet from the enzyme. The polypeptide is S-adenosylmethionine synthase (Colwellia psychrerythraea (strain 34H / ATCC BAA-681) (Vibrio psychroerythus)).